The chain runs to 186 residues: Protein FAM219A (186 aa).

Disordered stretches follow at residues 1–47 (MMEE…NYKP) and 59–132 (ELAR…GYSS). A compositionally biased stretch (polar residues) spans 67 to 81 (KNGTVGSPVNQQPKK). Positions 123–132 (SRYSSSGYSS) are enriched in low complexity.

The protein belongs to the FAM219 family.

The polypeptide is Protein FAM219A (fam219a) (Danio rerio (Zebrafish)).